The sequence spans 636 residues: Nucleolar protein 9 (636 aa).

The tract at residues 1–59 (MGQGPRSPHKVGRRFPAGGKRGRGAKGSGRPLPGRKRQPWPPPDGRSEPAPDSHPHLSP) is disordered. Residue Ser7 is modified to Phosphoserine. The segment covering 45 to 57 (GRSEPAPDSHPHL) has biased composition (basic and acidic residues). 2 Pumilio repeats span residues 92 to 123 (EVET…KPLC) and 189 to 223 (EVCD…ESER). Positions 222 to 241 (ERARPRGSQSSEAQKTPAQE) are disordered. The span at 228 to 238 (GSQSSEAQKTP) shows a compositional bias: polar residues. Pumilio repeat units follow at residues 313–348 (SVDG…QSLF), 351–386 (HLQG…SPVF), 509–544 (LTGP…RRRV), and 547–581 (NLKG…KEIA).

The protein belongs to the NOP9 family.

This Homo sapiens (Human) protein is Nucleolar protein 9 (NOP9).